Here is a 212-residue protein sequence, read N- to C-terminus: Ropporin-1 (212 aa).

Residues 12 to 49 form the RIIa domain; sequence PELPKMLKEFAKAAIRAQPQDLIQWGADYFEALSRGET. Position 56 is a phosphoserine (Ser-56). An interaction with RHPN1 region spans residues 209 to 212; that stretch reads VWLE.

It belongs to the ropporin family. Homodimer. Interacts with AKAP3. May interact with SPA17. Interacts with RHPN1. Interacts with FSCB; the interaction increases upon spermatozoa capacitation conditions. Interacts with CFAP61. Post-translationally, sumoylated, sumoylation decreases upon spermatozoa capacitation conditions.

The protein localises to the cell projection. The protein resides in the cilium. It is found in the flagellum. Important for male fertility. With ROPN1L, involved in fibrous sheath integrity and sperm motility, plays a role in PKA-dependent signaling processes required for spermatozoa capacitation. This Macaca fascicularis (Crab-eating macaque) protein is Ropporin-1 (ROPN1).